The following is a 360-amino-acid chain: Aminomethyltransferase (360 aa).

The protein belongs to the GcvT family. As to quaternary structure, the glycine cleavage system is composed of four proteins: P, T, L and H.

The enzyme catalyses N(6)-[(R)-S(8)-aminomethyldihydrolipoyl]-L-lysyl-[protein] + (6S)-5,6,7,8-tetrahydrofolate = N(6)-[(R)-dihydrolipoyl]-L-lysyl-[protein] + (6R)-5,10-methylene-5,6,7,8-tetrahydrofolate + NH4(+). The glycine cleavage system catalyzes the degradation of glycine. This is Aminomethyltransferase from Pseudomonas syringae pv. tomato (strain ATCC BAA-871 / DC3000).